We begin with the raw amino-acid sequence, 419 residues long: Gamma-glutamyl phosphate reductase (419 aa).

Belongs to the gamma-glutamyl phosphate reductase family.

Its subcellular location is the cytoplasm. It catalyses the reaction L-glutamate 5-semialdehyde + phosphate + NADP(+) = L-glutamyl 5-phosphate + NADPH + H(+). It participates in amino-acid biosynthesis; L-proline biosynthesis; L-glutamate 5-semialdehyde from L-glutamate: step 2/2. In terms of biological role, catalyzes the NADPH-dependent reduction of L-glutamate 5-phosphate into L-glutamate 5-semialdehyde and phosphate. The product spontaneously undergoes cyclization to form 1-pyrroline-5-carboxylate. This chain is Gamma-glutamyl phosphate reductase, found in Caldicellulosiruptor bescii (strain ATCC BAA-1888 / DSM 6725 / KCTC 15123 / Z-1320) (Anaerocellum thermophilum).